A 1678-amino-acid polypeptide reads, in one-letter code: Clathrin heavy chain (1678 aa).

7 WD40-like repeat regions span residues 24 to 67, 68 to 107, 108 to 149, 150 to 195, 196 to 257, 258 to 301, and 302 to 330; these read SFSF…RPIS, ADSA…MNED, VVFW…SSLN, GCQI…QAIE, GHAA…PEAQ, NDFP…ISAD, and TIFV…VTVD. 7 CHCR repeats span residues 538-684, 687-829, 834-973, 980-1125, 1129-1270, 1275-1421, and 1424-1567; these read VAEE…QICV, ATKY…SEDI, ILVV…QLID, LSET…VKEA, YIKA…FRLA, LHIV…LLLN, and LLVL…YDCF. Residues 1334-1643 form an involved in binding clathrin light chain region; sequence REHLELFWSR…IQMEPQLMIT (310 aa). The segment at 1552 to 1677 is trimerization; the sequence is EELLGWFLER…AGGRNMGYPY (126 aa).

The protein belongs to the clathrin heavy chain family. In terms of assembly, clathrin triskelions, composed of 3 heavy chains and 3 light chains, are the basic subunits of the clathrin coat. Interacts with sau.

It localises to the cytoplasmic vesicle membrane. It is found in the membrane. Its subcellular location is the coated pit. Functionally, clathrin is the major protein of the polyhedral coat of coated pits and vesicles. This chain is Clathrin heavy chain (Chc), found in Drosophila melanogaster (Fruit fly).